Consider the following 371-residue polypeptide: Cytochrome b (371 aa).

The next 4 membrane-spanning stretches (helical) occupy residues 25 to 45 (FGSM…FLAV), 69 to 90 (WMMQ…YIHI), 105 to 125 (WLSG…GYVL), and 170 to 190 (FFAL…LHIM). Residues His75 and His89 each contribute to the heme b site. Heme b-binding residues include His174 and His188. An a ubiquinone-binding site is contributed by His193. Transmembrane regions (helical) follow at residues 218–238 (YKDL…VSFL), 280–300 (LGGA…PFTH), 312–332 (IMQL…WAAT), and 339–358 (FTMI…IMNP).

This sequence belongs to the cytochrome b family. As to quaternary structure, the cytochrome bc1 complex contains 3 respiratory subunits (MT-CYB, CYC1 and UQCRFS1), 2 core proteins (UQCRC1 and UQCRC2) and probably 6 low-molecular weight proteins. Heme b is required as a cofactor.

It is found in the mitochondrion inner membrane. Functionally, component of the ubiquinol-cytochrome c reductase complex (complex III or cytochrome b-c1 complex) that is part of the mitochondrial respiratory chain. The b-c1 complex mediates electron transfer from ubiquinol to cytochrome c. Contributes to the generation of a proton gradient across the mitochondrial membrane that is then used for ATP synthesis. The polypeptide is Cytochrome b (MT-CYB) (Eryx miliaris (Desert sand boa)).